Consider the following 389-residue polypeptide: Transaldolase (389 aa).

The active-site Schiff-base intermediate with substrate is the Lys136. EF-hand domains are found at residues 330-365 (ALNQ…FDAI) and 365-388 (IDLN…VSKL). Ca(2+) contacts are provided by Asp343, Asp345, Asp347, Glu354, Asp366, Asn368, Asp370, Lys372, and Glu377.

Belongs to the transaldolase family. Type 1 subfamily.

The protein resides in the cytoplasm. It catalyses the reaction D-sedoheptulose 7-phosphate + D-glyceraldehyde 3-phosphate = D-erythrose 4-phosphate + beta-D-fructose 6-phosphate. The protein operates within carbohydrate degradation; pentose phosphate pathway; D-glyceraldehyde 3-phosphate and beta-D-fructose 6-phosphate from D-ribose 5-phosphate and D-xylulose 5-phosphate (non-oxidative stage): step 2/3. Functionally, transaldolase is important for the balance of metabolites in the pentose-phosphate pathway. The polypeptide is Transaldolase (Gloeobacter violaceus (strain ATCC 29082 / PCC 7421)).